The sequence spans 202 residues: Large ribosomal subunit protein uL4 (202 aa).

A compositionally biased stretch (polar residues) spans 42 to 52 (GTKAQKSRSQV). The segment at 42–70 (GTKAQKSRSQVSGTTKKSKKQKGGGARHG) is disordered.

It belongs to the universal ribosomal protein uL4 family. As to quaternary structure, part of the 50S ribosomal subunit.

Its function is as follows. One of the primary rRNA binding proteins, this protein initially binds near the 5'-end of the 23S rRNA. It is important during the early stages of 50S assembly. It makes multiple contacts with different domains of the 23S rRNA in the assembled 50S subunit and ribosome. In terms of biological role, forms part of the polypeptide exit tunnel. This is Large ribosomal subunit protein uL4 from Xylella fastidiosa (strain 9a5c).